The primary structure comprises 270 residues: Hemin import ATP-binding protein HmuV (270 aa).

Residues 5–242 (LEAEAATYSV…SLINRVFDIE (238 aa)) enclose the ABC transporter domain. Residue 37–44 (GPNGAGKS) coordinates ATP.

Belongs to the ABC transporter superfamily. Heme (hemin) importer (TC 3.A.1.14.5) family. The complex is composed of two ATP-binding proteins (HmuV), two transmembrane proteins (HmuU) and a solute-binding protein (HmuT).

The protein localises to the cell inner membrane. Functionally, part of the ABC transporter complex HmuTUV involved in hemin import. Responsible for energy coupling to the transport system. In Rhodopseudomonas palustris (strain BisA53), this protein is Hemin import ATP-binding protein HmuV.